Reading from the N-terminus, the 822-residue chain is ATP-dependent zinc metalloprotease FtsH (822 aa).

The Cytoplasmic portion of the chain corresponds to Met-1–Lys-76. The span at Ser-44–Asn-54 shows a compositional bias: polar residues. The disordered stretch occupies residues Ser-44–Pro-71. A helical transmembrane segment spans residues Ile-77–Ser-97. Over Gly-98–Ser-251 the chain is Extracellular. A helical membrane pass occupies residues Phe-252 to Ile-272. The Cytoplasmic segment spans residues Tyr-273–Lys-822. Position 347–354 (Gly-347–Thr-354) interacts with ATP. His-569 lines the Zn(2+) pocket. Glu-570 is an active-site residue. The Zn(2+) site is built by His-573 and Asp-648. Basic and acidic residues predominate over residues Lys-758–Val-794. The disordered stretch occupies residues Lys-758–Lys-822. Low complexity predominate over residues Lys-796–Thr-805. A compositionally biased stretch (basic and acidic residues) spans Pro-812–Lys-822.

In the central section; belongs to the AAA ATPase family. This sequence in the C-terminal section; belongs to the peptidase M41 family. As to quaternary structure, homohexamer. Requires Zn(2+) as cofactor.

It is found in the cell membrane. Functionally, acts as a processive, ATP-dependent zinc metallopeptidase for both cytoplasmic and membrane proteins. Plays a role in the quality control of integral membrane proteins. The chain is ATP-dependent zinc metalloprotease FtsH from Malacoplasma penetrans (strain HF-2) (Mycoplasma penetrans).